The sequence spans 569 residues: Dihydroxy-acid dehydratase (569 aa).

Asp80 serves as a coordination point for Mg(2+). Cys121 contacts [2Fe-2S] cluster. Residues Asp122 and Lys123 each contribute to the Mg(2+) site. Lys123 bears the N6-carboxylysine mark. Cys194 serves as a coordination point for [2Fe-2S] cluster. Glu446 is a binding site for Mg(2+). Residue Ser472 is the Proton acceptor of the active site.

The protein belongs to the IlvD/Edd family. Homodimer. It depends on [2Fe-2S] cluster as a cofactor. Mg(2+) is required as a cofactor.

It catalyses the reaction (2R)-2,3-dihydroxy-3-methylbutanoate = 3-methyl-2-oxobutanoate + H2O. The enzyme catalyses (2R,3R)-2,3-dihydroxy-3-methylpentanoate = (S)-3-methyl-2-oxopentanoate + H2O. It participates in amino-acid biosynthesis; L-isoleucine biosynthesis; L-isoleucine from 2-oxobutanoate: step 3/4. It functions in the pathway amino-acid biosynthesis; L-valine biosynthesis; L-valine from pyruvate: step 3/4. In terms of biological role, functions in the biosynthesis of branched-chain amino acids. Catalyzes the dehydration of (2R,3R)-2,3-dihydroxy-3-methylpentanoate (2,3-dihydroxy-3-methylvalerate) into 2-oxo-3-methylpentanoate (2-oxo-3-methylvalerate) and of (2R)-2,3-dihydroxy-3-methylbutanoate (2,3-dihydroxyisovalerate) into 2-oxo-3-methylbutanoate (2-oxoisovalerate), the penultimate precursor to L-isoleucine and L-valine, respectively. In Desulforudis audaxviator (strain MP104C), this protein is Dihydroxy-acid dehydratase.